A 447-amino-acid polypeptide reads, in one-letter code: Phosphoglucosamine mutase (447 aa).

Ser-102 acts as the Phosphoserine intermediate in catalysis. Mg(2+)-binding residues include Ser-102, Asp-241, Asp-243, and Asp-245. Position 102 is a phosphoserine (Ser-102).

It belongs to the phosphohexose mutase family. Mg(2+) is required as a cofactor. In terms of processing, activated by phosphorylation.

The catalysed reaction is alpha-D-glucosamine 1-phosphate = D-glucosamine 6-phosphate. Functionally, catalyzes the conversion of glucosamine-6-phosphate to glucosamine-1-phosphate. This Pseudomonas syringae pv. tomato (strain ATCC BAA-871 / DC3000) protein is Phosphoglucosamine mutase.